The sequence spans 457 residues: MKTKFCTGGEAEPSPLGLLLSCGSGSAAPAPGVGQQRDAASDLESKQLGGQQPPLALPPPPPLPLPLPLPQPPPPQPPADEQPEPRTRRRAYLWCKEFLPGAWRGLREDEFHISVIRGGLSNMLFQCSLPDTTATLGDEPRKVLLRLYGAILQMRSCNKEGSEQAQKENEFQGAEAMVLESVMFAILAERSLGPKLYGIFPQGRLEQFIPSRRLDTEELSLPDISAEIAEKMATFHGMKMPFNKEPKWLFGTMEKYLKEVLRIKFTEESRIKKLHKLLSYNLPLELENLRSLLESTPSPVVFCHNDCQEGNILLLEGRENSEKQKLMLIDFEYSSYNYRGFDIGNHFCEWMYDYSYEKYPFFRANIRKYPTKKQQLHFISSYLPAFQNDFENLSTEEKSIIKEEMLLEVNRFALASHFLWGLWSIVQAKISSIEFGYMDYAQARFDAYFHQKRKLGV.

Residues 1–86 (MKTKFCTGGE…PPADEQPEPR (86 aa)) form a disordered region. Positions 13–32 (PSPLGLLLSCGSGSAAPAPG) are enriched in low complexity. Residues 55-80 (LALPPPPPLPLPLPLPQPPPPQPPAD) show a composition bias toward pro residues. ATP-binding positions include 117–123 (RGGLSNM), R146, and 207–213 (QFIPSRR). 119 to 121 (GLS) is a phosphocholine binding site. K247 carries the N6-acetyllysine modification. At S279 the chain carries Phosphoserine. ATP contacts are provided by Q308 and D330.

It belongs to the choline/ethanolamine kinase family. As to quaternary structure, homodimer. Heterodimer with CHKB. In terms of assembly, monomer; acetylation by KAT5 promotes dissociation of the homodimer and monomerization. (Microbial infection) Interacts with PI4KA/PI4KIIIalpha; CHKA bridges PI4KA/PI4KIIIalpha and hepatitis C virus (HCV) non-structural protein 5A (NS5A) and potentiates NS5A-stimulated PI4KA activity, which then facilitates the targeting of the ternary complex to the ER for viral replication. Post-translationally, phosphorylated at Ser-279 by AMPK in response to glucose deprivation, leading to localization to lipid droplets. In terms of processing, acetylated by KAT5 at Lys-247 following phosphorylation by AMPK, leading to monomerization and conversion into a tyrosine-protein kinase.

It is found in the cytoplasm. It localises to the cytosol. The protein resides in the lipid droplet. It carries out the reaction choline + ATP = phosphocholine + ADP + H(+). The catalysed reaction is ethanolamine + ATP = phosphoethanolamine + ADP + H(+). The enzyme catalyses L-tyrosyl-[protein] + ATP = O-phospho-L-tyrosyl-[protein] + ADP + H(+). It functions in the pathway phospholipid metabolism; phosphatidylcholine biosynthesis; phosphocholine from choline: step 1/1. It participates in phospholipid metabolism; phosphatidylethanolamine biosynthesis; phosphatidylethanolamine from ethanolamine: step 1/3. Its activity is regulated as follows. Homodimerization or heterodimerization is required for the choline and ethanolamine kinase activities. Functionally, plays a key role in phospholipid biosynthesis by catalyzing the phosphorylation of free choline to phosphocholine, the first step in phosphatidylcholine biosynthesis. Also phosphorylates ethanolamine, thereby contributing to phosphatidylethanolamine biosynthesis. Has higher activity with choline. May contribute to tumor cell growth. Its function is as follows. This isoform plays a key role in lipolysis of lipid droplets following glucose deprivation. In response to glucose deprivation, phosphorylated by AMPK, promoting localization to lipid droplets. Phosphorylation is followed by acetylation by KAT5, leading to dissociation of the homodimer into a monomer. Monomeric CHKA isoform 1 is converted into a tyrosine-protein kinase, which phosphorylates lipid droplet structural proteins PLIN2 and PLIN3, leading to lipolysis of lipid droplets. In Homo sapiens (Human), this protein is Choline kinase alpha (CHKA).